We begin with the raw amino-acid sequence, 350 residues long: Arginine N-succinyltransferase (350 aa).

Residue Leu-125 participates in succinyl-CoA binding. Residue His-229 is the Proton donor of the active site.

It belongs to the arginine N-succinyltransferase family.

The catalysed reaction is succinyl-CoA + L-arginine = N(2)-succinyl-L-arginine + CoA + H(+). Its pathway is amino-acid degradation; L-arginine degradation via AST pathway; L-glutamate and succinate from L-arginine: step 1/5. Functionally, catalyzes the transfer of succinyl-CoA to arginine to produce N(2)-succinylarginine. The polypeptide is Arginine N-succinyltransferase (Yersinia pestis).